Consider the following 296-residue polypeptide: UDP-N-acetylglucosamine transporter TMEM241 (296 aa).

10 helical membrane-spanning segments follow: residues 7–29, 32–52, 67–87, 93–113, 121–141, 146–166, 187–207, 211–231, 250–270, and 271–291; these read LVGL…VLSV, FTYP…LLHV, SHVL…YAGS, LAIP…CGYQ, TSPA…CLPF, FNPD…AYKI, IFSV…FSVL, FLYF…GFFL, WIFF…DAIL, and TSAT…LVFS.

Belongs to the nucleotide-sugar transporter family. SLC35A subfamily.

The protein localises to the golgi apparatus. Its subcellular location is the cis-Golgi network membrane. In terms of biological role, golgi-localized UDP-N-acetylglucosamine (UDP-GlcNAc) transporter that transports UDP-N-acetylglucosamine into Golgi lumen. Contributes to lysosomal targeting of NPC2, a key protein required for lysosomal cholesterol exiting, and that utilizes the mannose-6-phosphate (M6P) modification pathway for its lysosomal targeting. The sequence is that of UDP-N-acetylglucosamine transporter TMEM241 from Homo sapiens (Human).